Consider the following 305-residue polypeptide: Acetylglutamate kinase (305 aa).

Residues 67-68, R89, and N190 contribute to the substrate site; that span reads GG.

The protein belongs to the acetylglutamate kinase family. ArgB subfamily.

It localises to the cytoplasm. It carries out the reaction N-acetyl-L-glutamate + ATP = N-acetyl-L-glutamyl 5-phosphate + ADP. Its pathway is amino-acid biosynthesis; L-arginine biosynthesis; N(2)-acetyl-L-ornithine from L-glutamate: step 2/4. Catalyzes the ATP-dependent phosphorylation of N-acetyl-L-glutamate. The chain is Acetylglutamate kinase from Bifidobacterium animalis subsp. lactis (strain AD011).